Reading from the N-terminus, the 56-residue chain is Large ribosomal subunit protein bL33 (56 aa).

This sequence belongs to the bacterial ribosomal protein bL33 family.

The protein is Large ribosomal subunit protein bL33 of Acidovorax sp. (strain JS42).